A 107-amino-acid polypeptide reads, in one-letter code: Anti-adapter protein IraM (107 aa).

The protein belongs to the IraM/RssC family.

It is found in the cytoplasm. Inhibits RpoS proteolysis by regulating RssB activity, thereby increasing the stability of the sigma stress factor RpoS during magnesium starvation. The protein is Anti-adapter protein IraM of Shigella sonnei (strain Ss046).